Reading from the N-terminus, the 117-residue chain is Transcription elongation factor A protein-like 8 (117 aa).

The disordered stretch occupies residues 1 to 81 (MQKSCDENEG…PEEVIRGVDE (81 aa)). Residues 41–81 (NVREETDGSLRGEPAEPSPEPKEDTPARHLNPEEVIRGVDE) show a composition bias toward basic and acidic residues. Residues 73 to 100 (EEVIRGVDELERLREEIRRVRNKFVLMH) adopt a coiled-coil conformation.

The protein belongs to the TFS-II family. TFA subfamily. In terms of tissue distribution, highly expressed in kidney. Moderately expressed in heart and lung. Low expression in brain and liver. Expression is up-regulated in nephrectomized kidney.

The protein resides in the nucleus. In terms of biological role, may be involved in transcriptional regulation. The polypeptide is Transcription elongation factor A protein-like 8 (Tceal8) (Rattus norvegicus (Rat)).